The chain runs to 548 residues: CTP synthase (548 aa).

An amidoligase domain region spans residues M1 to L267. S14 contributes to the CTP binding site. S14 is a binding site for UTP. Residues S15–L20 and D72 contribute to the ATP site. Mg(2+) contacts are provided by D72 and E141. Residues D148 to E150, K188 to Q193, and K224 each bind CTP. UTP-binding positions include K188–Q193 and K224. Positions T292–K545 constitute a Glutamine amidotransferase type-1 domain. G354 contacts L-glutamine. C381 functions as the Nucleophile; for glutamine hydrolysis in the catalytic mechanism. Residues L382–Q385, E405, and R473 contribute to the L-glutamine site. Catalysis depends on residues H518 and E520.

It belongs to the CTP synthase family. As to quaternary structure, homotetramer.

It carries out the reaction UTP + L-glutamine + ATP + H2O = CTP + L-glutamate + ADP + phosphate + 2 H(+). The catalysed reaction is L-glutamine + H2O = L-glutamate + NH4(+). It catalyses the reaction UTP + NH4(+) + ATP = CTP + ADP + phosphate + 2 H(+). The protein operates within pyrimidine metabolism; CTP biosynthesis via de novo pathway; CTP from UDP: step 2/2. Its activity is regulated as follows. Allosterically activated by GTP, when glutamine is the substrate; GTP has no effect on the reaction when ammonia is the substrate. The allosteric effector GTP functions by stabilizing the protein conformation that binds the tetrahedral intermediate(s) formed during glutamine hydrolysis. Inhibited by the product CTP, via allosteric rather than competitive inhibition. Catalyzes the ATP-dependent amination of UTP to CTP with either L-glutamine or ammonia as the source of nitrogen. Regulates intracellular CTP levels through interactions with the four ribonucleotide triphosphates. This is CTP synthase from Oleidesulfovibrio alaskensis (strain ATCC BAA-1058 / DSM 17464 / G20) (Desulfovibrio alaskensis).